Consider the following 1274-residue polypeptide: DENN domain-containing protein 5B (1274 aa).

Residue Ser2 is modified to N-acetylserine. The uDENN domain maps to 39–244 (DELAGENFDQ…EVPLPPPGRS (206 aa)). Ser49 and Ser178 each carry phosphoserine. Residues 263-399 (ELPLSDYPLR…VDFIQELSEV (137 aa)) form the cDENN domain. The dDENN domain occupies 401–581 (VQFGIPPEGS…DNKIMSQWEE (181 aa)). The RUN 1 domain occupies 772-932 (LEENTLIASL…DYFCFTSVFT (161 aa)). At Ser822 the chain carries Phosphoserine. Residues 916–936 (LLSLNAVDYFCFTSVFTTIMI) form a helical membrane-spanning segment. The PLAT domain occupies 936–1044 (IPYRSVIIPI…DDGSLERILI (109 aa)). Position 1062 is a phosphothreonine (Thr1062). 3 positions are modified to phosphoserine: Ser1068, Ser1076, and Ser1079. The 150-residue stretch at 1118–1267 (TVLLCGENGL…QDFTIVLEGS (150 aa)) folds into the RUN 2 domain.

It belongs to the RAB6IP1 family.

It localises to the membrane. In terms of biological role, guanine nucleotide exchange factor (GEF) which may activate RAB39A and/or RAB39B. Promotes the exchange of GDP to GTP, converting inactive GDP-bound Rab proteins into their active GTP-bound form. This is DENN domain-containing protein 5B (DENND5B) from Homo sapiens (Human).